A 1248-amino-acid chain; its full sequence is ABC transporter B family member 7 (1248 aa).

6 helical membrane passes run 32–52 (IVLM…QPFM), 82–102 (FLYL…CWMV), 158–175 (FTQL…AFIV), 179–201 (LTLA…TYIM), 261–281 (GLGI…AIWY), and 299–321 (VITS…NSFA). The ABC transmembrane type-1 1 domain occupies 35-322 (MVIGTLSAMA…TLPSLNSFAA (288 aa)). The 237-residue stretch at 357-593 (IELRDVYFRY…PEGTYSQLVR (237 aa)) folds into the ABC transporter 1 domain. 392 to 399 (GQSGSGKS) provides a ligand contact to ATP. Residues Asn473 and Asn652 are each glycosylated (N-linked (GlcNAc...) asparagine). The helical transmembrane segment at 682 to 702 (VLLLGSLAAVIHGIVFPVQGL) threads the bilayer. The ABC transmembrane type-1 2 domain occupies 683–970 (LLLGSLAAVI…TSTMAPDINK (288 aa)). An N-linked (GlcNAc...) asparagine glycan is attached at Asn720. Residues 722–742 (SLFWALIFVALGLTDLIVIPL) form a helical membrane-spanning segment. Asn779 carries N-linked (GlcNAc...) asparagine glycosylation. Transmembrane regions (helical) follow at residues 813–833 (IIGA…MALL), 834–854 (VAPV…GFGA), 914–934 (GSYL…SWLI), and 939–959 (ATFG…VGVT). Positions 1005–1242 (IELQHVSFRY…SGGAYASLVA (238 aa)) constitute an ABC transporter 2 domain. Residue 1040-1047 (GESGSGKS) coordinates ATP. N-linked (GlcNAc...) asparagine glycosylation is found at Asn1094, Asn1193, and Asn1244.

Belongs to the ABC transporter superfamily. ABCB family. Multidrug resistance exporter (TC 3.A.1.201) subfamily.

Its subcellular location is the membrane. This is ABC transporter B family member 7 (ABCB7) from Arabidopsis thaliana (Mouse-ear cress).